The sequence spans 355 residues: Sesquiterpene synthase MAJ_08936 (355 aa).

Mg(2+) is bound by residues Asp91 and Asp96. Positions 91-96 match the DDXXXD motif motif; the sequence is DDLFVD. Arg184 lines the substrate pocket. Mg(2+)-binding residues include Asn230, Ser234, and Glu238.

The protein belongs to the terpene synthase family. Requires Mg(2+) as cofactor.

It carries out the reaction (2E,6E)-farnesyl diphosphate + H2O = (+)-corvol ether B + diphosphate. The enzyme catalyses (2E,6E)-farnesyl diphosphate + H2O = (+)-corvol ether A + diphosphate. Functionally, terpene synthase that catalyzes the conversion of (2E,6E)-farnesyl diphosphate (FPP) into sesquiterpenes which are important for fungi-environment interactions. Produces a mixture consisting of 8 sesquiterpenes including corvol ethers A and B, as well as traces of epizonarene, gamma-cadinene, delta-cadinene, alpha-cadinene, alpha-cadinol, and an unidentified sesquiterpene. The major product is corvol ether A. In Metarhizium majus (strain ARSEF 297), this protein is Sesquiterpene synthase MAJ_08936.